The chain runs to 559 residues: MKYSELAGLYRRLEKTTLKTLKTRFVADFLKNVPDELLEIVPYLILGKVFPDWDERELGVGEKLLIKAVSIATGVPEGEIENSIKDTGDLGESIALAVKKKKQKSFFSQPLTIKRVYDTFVKVAESQGEGSQDRKMKYLANLFMDAQPEEAKYIARTVLGTMRTGVAEGILRDAIAEAFKVKAELVERAYMLTSDFGYVTKVAKLEGNEGLSKVRIQVGKPVRPMLAQNAASVKDALLEMGGEAAFEIKYDGARVQVHKDGDRVVIYSRRLENVTRSIPEIVEAVRSQLRPEKAIVEGELVAVGDGGKPRPFQYVLRRFRRKYNIEEMIERIPLELNLFDVLYVDGESLVDTPFMERRKRLEEAVEESERIKLAQQLVTKKAEEAEEFYRRALELGHEGLMAKRLDSVYEPGNRGKKWLKIKPTMEDLDLVIIGAEWGEGRRAHLLGSFLVAAYDQHRGEFVPVGKVGSGFTDEDLAEFTKMLKPLIVREEGKYVEIEPRVVIQVTYQEIQKSPKYESGFALRFPRYVALREDKSPEEADTIERISELYGLQERFKAKR.

Glutamate 247 contacts ATP. The N6-AMP-lysine intermediate role is filled by lysine 249. Positions 254, 269, 299, 339, 414, and 420 each coordinate ATP.

This sequence belongs to the ATP-dependent DNA ligase family. Mg(2+) is required as a cofactor.

It catalyses the reaction ATP + (deoxyribonucleotide)n-3'-hydroxyl + 5'-phospho-(deoxyribonucleotide)m = (deoxyribonucleotide)n+m + AMP + diphosphate.. The catalysed reaction is NAD(+) + (deoxyribonucleotide)n-3'-hydroxyl + 5'-phospho-(deoxyribonucleotide)m = (deoxyribonucleotide)n+m + AMP + beta-nicotinamide D-nucleotide.. Its function is as follows. DNA ligase that seals nicks in double-stranded DNA during DNA replication, DNA recombination and DNA repair. Shows high activity with either ATP or NAD(+). The sequence is that of DNA ligase from Thermococcus fumicolans.